We begin with the raw amino-acid sequence, 1230 residues long: MKKGNLEANTKTVPFYKLFFFSDSTDVLLMIVGSIGAIANGVCSPLMTLLFGELIDAMGPNQNNEEIVERVSKVCLSLVYLGLGALGAAFLQVACWMITGERQAARIRSLYLKTILRQDIGFFDVEMTTGEVVGRMSGDTVLILDAMGEKVGKFIQLISTFVGGFVIAFLRGWLLTLVMLTSIPLLAMSGAAIAIIVTRASSQEQAAYAKASNVVEQTLGSIRTVASFTGEKQAMSSYKELINLAYKSNVKQGFVTGLGLGVMFLVFFSTYALGTWFGGEMILRKGYTGGAVINVMVTVVSSSIALGQASPCLTAFTAGKAAAYKMFETIEREPLIDTFDLNGKVLEDIRGEIELRDVCFSYPARPKEEVFGGFSLLIPSGTTTALVGESGSGKSTVISLIERFYDPNSGQVLIDGVDLKEFQLKWIRGKIGLVSQEPVLFSSSIMENIGYGKEGATVEEIQAASKLANAAKFIDKLPLGLETLVGEHGTQLSGGQKQRIAIARAILKDPRILLLDEATSALDAESERVVQEALDRIMVNRTTVIVAHRLSTVRNADIIAVIHRGKIVEEGSHSELLKDHEGAYSQLLRLQEINKESKRLEISDGSISSGSSRGNNSTRQDDDSFSVLGLLAGQDSTKMSQELSQKVSFTRIAALNKPEIPILILGTLVGAVNGTIFPIFGILFAKVIEAFFKAPHELKRDSRFWSMIFVLLGVAAVIVYPTTNYLFAIAGGRLIRRIRSMCFEKVVHMEVGWFDEPGNSSGAMGARLSADAALIRTLVGDSLCLSVKNVASLVTGLIIAFTASWEVAIIILVIIPFIGINGYIQIKFMKGFSADAKAKYEEASQVANDAVGSIRTVASFCAEEKVMEMYKKRCEDTIKSGIKQGLISGVGFGISFFVLYSVYASCFYVGARLVKAGRTNFNDVFQVFLALTLTAVGISQASSFAPDSSKGKGAAVSIFRIIDRISKIDSRDESGMVLENVKGDIELCHISFTYQTRPDVQVFRDLCLSIRAGQTVALVGESGSGKSTVISLLQRFYDPDSGHITLDGVELKKLRLKWLRQQMGLVGQEPVLFNDTIRANIAYGKGGEEATEAEIIAASELANAHRFISSIQKGYDTVVGERGIQLSGGQKQRVAIARAIVKEPKILLLDEATSALDAESERVVQDALDRVMVNRTTIVVAHRLSTIKNADVIAVVKNGVIAEKGTHETLINIEGGVYASLVQLHINASN.

6 helical membrane passes run 27–47, 78–98, 154–174, 177–197, 253–273, and 286–306; these read VLLMIVGSIGAIANGVCSPLM, LVYLGLGALGAAFLQVACWMI, FIQLISTFVGGFVIAFLRGWL, LVMLTSIPLLAMSGAAIAIIV, GFVTGLGLGVMFLVFFSTYAL, and GYTGGAVINVMVTVVSSSIAL. Residues 30–318 enclose the ABC transmembrane type-1 1 domain; it reads MIVGSIGAIA…ASPCLTAFTA (289 aa). The ABC transporter 1 domain occupies 353 to 589; it reads IELRDVCFSY…HEGAYSQLLR (237 aa). Residue 388 to 395 coordinates ATP; it reads GESGSGKS. N-linked (GlcNAc...) asparagine glycans are attached at residues Asn-540, Asn-615, and Asn-616. The disordered stretch occupies residues 602–621; that stretch reads ISDGSISSGSSRGNNSTRQD. Residues 603–617 show a composition bias toward low complexity; that stretch reads SDGSISSGSSRGNNS. The next 2 membrane-spanning stretches (helical) occupy residues 662 to 682 and 707 to 727; these read ILILGTLVGAVNGTIFPIFGI and MIFVLLGVAAVIVYPTTNYLF. The region spanning 663-950 is the ABC transmembrane type-1 2 domain; it reads LILGTLVGAV…ASSFAPDSSK (288 aa). N-linked (GlcNAc...) asparagine glycosylation occurs at Asn-759. Transmembrane regions (helical) follow at residues 798 to 818, 889 to 909, and 924 to 944; these read IIAFTASWEVAIIILVIIPFI, GVGFGISFFVLYSVYASCFYV, and VFQVFLALTLTAVGISQASSF. Residues 985–1223 form the ABC transporter 2 domain; the sequence is IELCHISFTY…EGGVYASLVQ (239 aa). 1020–1027 lines the ATP pocket; that stretch reads GESGSGKS. Asn-1074, Asn-1174, and Asn-1227 each carry an N-linked (GlcNAc...) asparagine glycan.

It belongs to the ABC transporter superfamily. ABCB family. Multidrug resistance exporter (TC 3.A.1.201) subfamily.

The protein resides in the membrane. The chain is ABC transporter B family member 5 (ABCB5) from Arabidopsis thaliana (Mouse-ear cress).